The chain runs to 382 residues: Protein arginine N-methyltransferase 2 (382 aa).

2 ANK repeats span residues 22–46 (AAQT…FQDD) and 48–80 (LGWS…AVDK). Residues 134–382 (KTSAGDNLVF…RLPIAKMSLI (249 aa)) enclose the RMT2 domain. Residues F143, M177, 205–210 (FGLGIV), 228–230 (EAH), 255–256 (WQ), and D284 contribute to the S-adenosyl-L-methionine site.

The protein belongs to the class I-like SAM-binding methyltransferase superfamily. RMT2 methyltransferase family. As to quaternary structure, monomer.

Its subcellular location is the cytoplasm. The protein localises to the nucleus. In terms of biological role, S-adenosyl-L-methionine-dependent protein-arginine N-methyltransferase that methylates the delta-nitrogen atom of arginine residues to form N5-methylarginine (type IV) in target proteins. Monomethylates ribosomal protein L12. The chain is Protein arginine N-methyltransferase 2 from Cryptococcus neoformans var. neoformans serotype D (strain JEC21 / ATCC MYA-565) (Filobasidiella neoformans).